Reading from the N-terminus, the 293-residue chain is MVEHYSVLHKEVLEFSKLIEGEVFVDATVGGGGHSYLILKQNLNLKLIGLDKDDYALKVAKERLKEFEDRITLVKSSFKDLDKVLQSLQIKEINGILFDFGVSTFQLKLERGFSFQREEFLDMRMDTTQKLTAYDIVNYYREQDLYNIIKTYGEEKFASKIAKSIVEYRKKKKIETTKELADIVYRCYPPNLRHGKIHPATRTFQAIRIEVNNELKDIEEGLEKAINLLAKNGIIMAISFHSLEDRIVKNMFKKYKELKFLEILTKKPITPSDEEIKENPASRSAKLRVGRRI.

Residues 32-34, D51, F78, D99, and Q106 each bind S-adenosyl-L-methionine; that span reads GGH. The segment at 272–293 is disordered; it reads SDEEIKENPASRSAKLRVGRRI.

Belongs to the methyltransferase superfamily. RsmH family.

The protein resides in the cytoplasm. It carries out the reaction cytidine(1402) in 16S rRNA + S-adenosyl-L-methionine = N(4)-methylcytidine(1402) in 16S rRNA + S-adenosyl-L-homocysteine + H(+). Specifically methylates the N4 position of cytidine in position 1402 (C1402) of 16S rRNA. In Sulfurihydrogenibium sp. (strain YO3AOP1), this protein is Ribosomal RNA small subunit methyltransferase H.